A 304-amino-acid chain; its full sequence is Acetylglutamate kinase (304 aa).

Substrate is bound by residues 82–83 (GG), Arg-104, and Asn-197.

It belongs to the acetylglutamate kinase family. ArgB subfamily.

The protein localises to the cytoplasm. The catalysed reaction is N-acetyl-L-glutamate + ATP = N-acetyl-L-glutamyl 5-phosphate + ADP. It functions in the pathway amino-acid biosynthesis; L-arginine biosynthesis; N(2)-acetyl-L-ornithine from L-glutamate: step 2/4. Its function is as follows. Catalyzes the ATP-dependent phosphorylation of N-acetyl-L-glutamate. In Prochlorococcus marinus (strain NATL2A), this protein is Acetylglutamate kinase.